The following is a 277-amino-acid chain: Phosphate import ATP-binding protein PstB (277 aa).

Residues 31–272 (IEVPGLSLYY…PAKKQTEDYI (242 aa)) form the ABC transporter domain. Position 63-70 (63-70 (GPSGCGKS)) interacts with ATP.

The protein belongs to the ABC transporter superfamily. Phosphate importer (TC 3.A.1.7) family. The complex is composed of two ATP-binding proteins (PstB), two transmembrane proteins (PstC and PstA) and a solute-binding protein (PstS).

The protein localises to the cell inner membrane. The catalysed reaction is phosphate(out) + ATP + H2O = ADP + 2 phosphate(in) + H(+). Functionally, part of the ABC transporter complex PstSACB involved in phosphate import. Responsible for energy coupling to the transport system. The polypeptide is Phosphate import ATP-binding protein PstB (Pseudomonas fluorescens (strain ATCC BAA-477 / NRRL B-23932 / Pf-5)).